Consider the following 498-residue polypeptide: Alpha-amylase A (498 aa).

A signal peptide spans Met1–Ala21. A disulfide bridge connects residues Cys51 and Cys59. Gln56 and Trp104 together coordinate substrate. Asn142 serves as a coordination point for Ca(2+). His143 provides a ligand contact to substrate. A disulfide bridge links Cys171 with Cys185. The Ca(2+) site is built by Glu183 and Asp196. N-linked (GlcNAc...) asparagine glycosylation occurs at Asn218. Residue Arg225 participates in substrate binding. Residues Asp227, His231, and Glu251 each coordinate Ca(2+). Asp227 (nucleophile) is an active-site residue. Lys230–His231 contacts substrate. Glu251 functions as the Proton donor in the catalytic mechanism. Position 255 (Gly255) interacts with substrate. The cysteines at positions 261 and 304 are disulfide-linked. Substrate is bound by residues Asp318 and Arg365. Residues Cys461 and Cys496 are joined by a disulfide bond.

It belongs to the glycosyl hydrolase 13 family. Requires Ca(2+) as cofactor.

The catalysed reaction is Endohydrolysis of (1-&gt;4)-alpha-D-glucosidic linkages in polysaccharides containing three or more (1-&gt;4)-alpha-linked D-glucose units.. The polypeptide is Alpha-amylase A (amyA) (Aspergillus awamori (Black koji mold)).